The following is a 272-amino-acid chain: MRMALGISYNGQAYCGWQSQPSVRTVQDALEAALGRFATHPVSTLCAGRTDAGVHGLMQVVHFDTPLDRPAASWVRGTNGFLPADIAVQWAQAVPDSFHARASALARRYAYVLLQSPVRPSVESGRVGWVCHRLDHDAMQQAADYLVGEHDFSAFRASTCQAPSPVKTLRRIGISCRGQSPPHPALGWSPCYWRFEFVANAFLHHMIRNIMGCLVAIGQGKQSPQWMQQLLRARSRAAAAPTFAPDGLYFLGPVYAAGWGLPERTVAFDGWP.

The Nucleophile role is filled by D51. Position 109 (Y109) interacts with substrate.

It belongs to the tRNA pseudouridine synthase TruA family. As to quaternary structure, homodimer.

The catalysed reaction is uridine(38/39/40) in tRNA = pseudouridine(38/39/40) in tRNA. Formation of pseudouridine at positions 38, 39 and 40 in the anticodon stem and loop of transfer RNAs. In Verminephrobacter eiseniae (strain EF01-2), this protein is tRNA pseudouridine synthase A.